The sequence spans 358 residues: MSIQTDDFAAPPPKRILSGAPASPNEEAVERALRPKLLDEYVGQAKVREQLEIFISAARMRDEALDHVLLFGPPGLGKTTLSHIIAHELGVNLRQTSGPVLEKPKDLAALLTNLEKNDVLFIDEIHRLSPVVEEILYPALEDYKIDIMIGEGPAARSIKLDLQPFTLIGATTRAGMLTNPLRDRFGIVARLEFYSPEELASIVRRSAGLLKVPTDEKGGFEIARRSRGTPRIANRLLRRVRDYADVKGAGEITLDIAHRALVMLDVDPQGFDLMDRKLLEAVIHRFDGGPVGLDNIAASIGEERETIEDVIEPYLIQQGYLQRTPRGRIATLAAYKHLGVTPPAAQSGGDMFGAMRPE.

The interval 1–24 (MSIQTDDFAAPPPKRILSGAPASP) is disordered. A large ATPase domain (RuvB-L) region spans residues 5-194 (TDDFAAPPPK…FGIVARLEFY (190 aa)). Residues Leu-33, Arg-34, Gly-75, Lys-78, Thr-79, Thr-80, 141–143 (EDY), Arg-184, Tyr-194, and Arg-231 contribute to the ATP site. Thr-79 contacts Mg(2+). The small ATPAse domain (RuvB-S) stretch occupies residues 195-265 (SPEELASIVR…IAHRALVMLD (71 aa)). A head domain (RuvB-H) region spans residues 268–358 (PQGFDLMDRK…GDMFGAMRPE (91 aa)). DNA is bound by residues Arg-304, Arg-323, and Arg-328.

The protein belongs to the RuvB family. Homohexamer. Forms an RuvA(8)-RuvB(12)-Holliday junction (HJ) complex. HJ DNA is sandwiched between 2 RuvA tetramers; dsDNA enters through RuvA and exits via RuvB. An RuvB hexamer assembles on each DNA strand where it exits the tetramer. Each RuvB hexamer is contacted by two RuvA subunits (via domain III) on 2 adjacent RuvB subunits; this complex drives branch migration. In the full resolvosome a probable DNA-RuvA(4)-RuvB(12)-RuvC(2) complex forms which resolves the HJ.

Its subcellular location is the cytoplasm. The enzyme catalyses ATP + H2O = ADP + phosphate + H(+). The RuvA-RuvB-RuvC complex processes Holliday junction (HJ) DNA during genetic recombination and DNA repair, while the RuvA-RuvB complex plays an important role in the rescue of blocked DNA replication forks via replication fork reversal (RFR). RuvA specifically binds to HJ cruciform DNA, conferring on it an open structure. The RuvB hexamer acts as an ATP-dependent pump, pulling dsDNA into and through the RuvAB complex. RuvB forms 2 homohexamers on either side of HJ DNA bound by 1 or 2 RuvA tetramers; 4 subunits per hexamer contact DNA at a time. Coordinated motions by a converter formed by DNA-disengaged RuvB subunits stimulates ATP hydrolysis and nucleotide exchange. Immobilization of the converter enables RuvB to convert the ATP-contained energy into a lever motion, pulling 2 nucleotides of DNA out of the RuvA tetramer per ATP hydrolyzed, thus driving DNA branch migration. The RuvB motors rotate together with the DNA substrate, which together with the progressing nucleotide cycle form the mechanistic basis for DNA recombination by continuous HJ branch migration. Branch migration allows RuvC to scan DNA until it finds its consensus sequence, where it cleaves and resolves cruciform DNA. This chain is Holliday junction branch migration complex subunit RuvB, found in Albidiferax ferrireducens (strain ATCC BAA-621 / DSM 15236 / T118) (Rhodoferax ferrireducens).